A 367-amino-acid chain; its full sequence is MATGLIKAKEYDWKDSNLALFGSDTEKQVKKDSAATEPAWKGAGQKEGLKIWRIVNFKVTEWPQNQHGKFYNGDSYIILNTYKPDPKSNELAYDVHFWIGSQSSQDEYGTAAYKTVELDTFLDDKPVQHREVQGYESELFRNYFKQGLTILEGGAETGFHHVKPTEYKPRLLHFSGQKQQIYVHEVPLVKERLDHKDVFILDLGLTLYQWNGKESSKEEGFKAMQYLGLMRSERPKAEAETLEDESTPESHKFYTSLTGTDEPNLVKPLVKEENQLLKVSDAGGHLKTTEVKRGAVNSKDFSSNDVFILDTGDQCFVWVGKGRFAVGEAEWTRISHAHLMKTCHPLAPIHVIKEGQLCKAFNVAIAA.

The tract at residues 1-185 (MATGLIKAKE…GQKQQIYVHE (185 aa)) is actin binding. Gelsolin-like repeat units follow at residues 56 to 141 (NFKV…ELFR) and 179 to 225 (QQIY…KAMQ). An actin-actin interfilament contact point region spans residues 106–109 (DEYG). An actin binding, Actin-severing region spans residues 186-295 (VPLVKERLDH…LKTTEVKRGA (110 aa)). A disordered region spans residues 235–257 (PKAEAETLEDESTPESHKFYTSL). A Gelsolin-like 3 repeat occupies 287–322 (KTTEVKRGAVNSKDFSSNDVFILDTGDQCFVWVGKG). Residues 296–366 (VNSKDFSSND…LCKAFNVAIA (71 aa)) are actin-severing, Ca-sensitive.

The protein belongs to the villin/gelsolin family. As to quaternary structure, interacts with actin monomers and filaments. Expressed in circular and longitudinal muscle, pseudohearts, pharynx and gizzard. Also expressed in male germ cells at the proximal pole of primary spermatocytes in 16 cell-stage morulae, and in the distal parts of the spermatocytes in 32 and 64 cell-stage morulae. In the spermatids of the 128 cell-stage morulae it is expressed at the proximal pole of the elongated nucleus and the distal pole near the base of the flagellae.

The protein localises to the cytoplasm. It localises to the cytoskeleton. Its function is as follows. Calcium-regulated protein that binds to the plus (or barbed) ends of actin monomers or filaments, preventing monomer exchange (end-blocking or capping). Can promote the assembly of monomers into filaments (nucleation) as well as sever existing filaments. The sequence is that of Gelsolin-like protein 1 from Lumbricus terrestris (Common earthworm).